We begin with the raw amino-acid sequence, 254 residues long: Guanylate kinase (254 aa).

Residues 64-243 form the Guanylate kinase-like domain; sequence KHLVVLAGPT…AAREVVDLMM (180 aa). An ATP-binding site is contributed by 71–78; that stretch reads GPTAVGKG.

This sequence belongs to the guanylate kinase family.

The protein localises to the cytoplasm. The enzyme catalyses GMP + ATP = GDP + ADP. Its function is as follows. Essential for recycling GMP and indirectly, cGMP. The polypeptide is Guanylate kinase (Leifsonia xyli subsp. xyli (strain CTCB07)).